Here is a 187-residue protein sequence, read N- to C-terminus: Orotate phosphoribosyltransferase (187 aa).

5-phospho-alpha-D-ribose 1-diphosphate-binding positions include R99, K100, K103, H105, and 125-133 (DDVITTGGS). T129 and R157 together coordinate orotate.

The protein belongs to the purine/pyrimidine phosphoribosyltransferase family. PyrE subfamily. Homodimer. The cofactor is Mg(2+).

The catalysed reaction is orotidine 5'-phosphate + diphosphate = orotate + 5-phospho-alpha-D-ribose 1-diphosphate. Its pathway is pyrimidine metabolism; UMP biosynthesis via de novo pathway; UMP from orotate: step 1/2. Catalyzes the transfer of a ribosyl phosphate group from 5-phosphoribose 1-diphosphate to orotate, leading to the formation of orotidine monophosphate (OMP). The chain is Orotate phosphoribosyltransferase from Leptospira borgpetersenii serovar Hardjo-bovis (strain L550).